The sequence spans 277 residues: Orotidine 5'-phosphate decarboxylase (277 aa).

Residues D40, 62 to 64 (KTH), 93 to 102 (DRKFIDIGNT), Y229, and R247 contribute to the substrate site. K95 serves as the catalytic Proton donor.

This sequence belongs to the OMP decarboxylase family.

The enzyme catalyses orotidine 5'-phosphate + H(+) = UMP + CO2. The protein operates within pyrimidine metabolism; UMP biosynthesis via de novo pathway; UMP from orotate: step 2/2. In Aspergillus awamori (Black koji mold), this protein is Orotidine 5'-phosphate decarboxylase (pyrG).